Reading from the N-terminus, the 168-residue chain is uncharacterized protein (168 aa).

This is an uncharacterized protein from Saccharomyces cerevisiae (strain ATCC 204508 / S288c) (Baker's yeast).